The primary structure comprises 473 residues: MTRGRVIQVMGPVVDVKFENGHLPAIYNALKIQHKARNENEVDIDLTLEVALHLGDDTVRTIAMASTDGLIRGMEVIDTGAPISVPVGEVTLGRVFNVLGEPIDLEGDIPADARRDPIHRPAPKFEELATEVEILETGIKVVDLLAPYIKGGKIGLFGGAGVGKTVLIQELIHNIAQEHGGISVFAGVGERTREGNDLYHEMKDSGVISKTAMVFGQMNEPPGARMRVALTGLTMAEYFRDEQGQDVLLFIDNIFRFTQAGSEVSALLGRMPSAVGYQPTLATEMGQLQERITSTAKGSITSIQAIYVPADDYTDPAPATTFSHLDATTNLERKLAEMGIYPAVDPLASTSRALAPEIVGEEHYQVARKVQQTLQRYKELQDIIAILGMDELSDEDKLVVHRARRIQFFLSQNFHVAEQFTGQPGSYVPVKETVRGFKEILEGKYDHLPEDRFRLVGRIEDVVEKAKAMGVEV.

158 to 165 (GGAGVGKT) serves as a coordination point for ATP.

Belongs to the ATPase alpha/beta chains family. F-type ATPases have 2 components, CF(1) - the catalytic core - and CF(0) - the membrane proton channel. CF(1) has five subunits: alpha(3), beta(3), gamma(1), delta(1), epsilon(1). CF(0) has three main subunits: a(1), b(2) and c(9-12). The alpha and beta chains form an alternating ring which encloses part of the gamma chain. CF(1) is attached to CF(0) by a central stalk formed by the gamma and epsilon chains, while a peripheral stalk is formed by the delta and b chains.

The protein localises to the cell membrane. The catalysed reaction is ATP + H2O + 4 H(+)(in) = ADP + phosphate + 5 H(+)(out). In terms of biological role, produces ATP from ADP in the presence of a proton gradient across the membrane. The catalytic sites are hosted primarily by the beta subunits. The polypeptide is ATP synthase subunit beta (Geobacillus thermoleovorans (Bacillus thermoleovorans)).